We begin with the raw amino-acid sequence, 531 residues long: Dimethylnonatriene synthase (531 aa).

Residues 6 to 26 traverse the membrane as a helical segment; it reads TMSVAMALAAAIFVVLCSVVA. Cys-464 contacts heme.

Belongs to the cytochrome P450 family. Heme serves as cofactor.

The protein localises to the membrane. It catalyses the reaction (6E,10E)-geranyllinalool + reduced [NADPH--hemoprotein reductase] + O2 = (3E,7E)-4,8,12-trimethyltrideca 1,3,7,11-tetraene + but-3-en-2-one + oxidized [NADPH--hemoprotein reductase] + 2 H2O + H(+). It carries out the reaction (3S,6E)-nerolidol + reduced [NADPH--hemoprotein reductase] + O2 = (3E)-4,8-dimethylnona-1,3,7-triene + but-3-en-2-one + oxidized [NADPH--hemoprotein reductase] + 2 H2O + H(+). The protein operates within secondary metabolite biosynthesis; terpenoid biosynthesis. Involved in the biosynthesis of homoterpenes, attractants of herbivores parasitoids and predators (e.g. predatory mites and parasitoid wasps). Component of the volatile terpenes biosynthesis pathways. Converts mainly nerolidol to dimethylnonatriene (DMNT) and, to a lower extent, geranyllinalool to trimethyltridecatetraene (TMTT). The chain is Dimethylnonatriene synthase from Zea mays (Maize).